A 71-amino-acid polypeptide reads, in one-letter code: High-potential iron-sulfur protein (71 aa).

Residue Gln1 is modified to Pyrrolidone carboxylic acid. The [4Fe-4S] cluster site is built by Cys37, Cys40, Cys50, and Cys64.

It belongs to the high-potential iron-sulfur protein (HiPIP) family. As to quaternary structure, homodimer.

Its function is as follows. Specific class of high-redox-potential 4Fe-4S ferredoxins. Functions in anaerobic electron transport in most purple and in some other photosynthetic bacteria and in at least one genus (Paracoccus) of halophilic, denitrifying bacteria. The polypeptide is High-potential iron-sulfur protein (hip) (Halomonas halodenitrificans (strain ATCC 12084 / NCIMB 8669) (Paracoccus halodenitrificans)).